A 269-amino-acid polypeptide reads, in one-letter code: uncharacterized protein (269 aa).

15 to 41 (QKSVLITGCSSGIGLESALELKRQGFH) contacts NADP(+). A substrate-binding site is contributed by Ser146. Catalysis depends on Tyr159, which acts as the Proton acceptor.

The protein belongs to the short-chain dehydrogenases/reductases (SDR) family.

This is an uncharacterized protein from Escherichia coli O6:H1 (strain CFT073 / ATCC 700928 / UPEC).